Here is an 80-residue protein sequence, read N- to C-terminus: uncharacterized protein (80 aa).

The helical transmembrane segment at 10–29 threads the bilayer; the sequence is FVAREYPLVVVPFIYFVLFL.

Its subcellular location is the membrane. This is an uncharacterized protein from Saccharomyces cerevisiae (strain ATCC 204508 / S288c) (Baker's yeast).